The sequence spans 389 residues: Calreticulin (389 aa).

The N-terminal stretch at 1–13 (MFTLFLLIALSSA) is a signal peptide. Positions 12–189 (SAKVYFHETF…GVEKQEGKFD (178 aa)) are N-domain. Threonine 20, asparagine 52, and asparagine 53 together coordinate Ca(2+). The cysteines at positions 96 and 130 are disulfide-linked. An alpha-D-glucoside is bound by residues tyrosine 100, lysine 102, tyrosine 121, and aspartate 128. Repeat copies occupy residues 183 to 194 (KQEGKFDEDWDM), 202 to 213 (DPNVSKPADWVD), 219 to 230 (DPNDKKPEGWDD), 237 to 248 (DPNAKKPEEWND), 252 to 262 (GEWEAPTIENP), 266 to 276 (GEWKPKRIPNP), and 280 to 290 (GEWVHPQIANP). A 4 X approximate repeats region spans residues 183 to 248 (KQEGKFDEDW…NAKKPEEWND (66 aa)). Positions 190–301 (EDWDMLAPKE…YVYDPELYKY (112 aa)) are P-domain. The segment covering 213 to 232 (DEKEIDDPNDKKPEGWDDIP) has biased composition (basic and acidic residues). The disordered stretch occupies residues 213-256 (DEKEIDDPNDKKPEGWDDIPKTIVDPNAKKPEEWNDEDDGEWEA). The interval 252 to 290 (GEWEAPTIENPEYKGEWKPKRIPNPAYKGEWVHPQIANP) is 3 X approximate repeats. The segment at 302–389 (DSFAYIGIDV…IKKEENKEEL (88 aa)) is C-domain. An alpha-D-glucoside is bound at residue aspartate 310. Aspartate 321 serves as a coordination point for Ca(2+). Positions 329 to 388 (IEEAEKEAKVILERNAAEKKMRDEIKEAEKQKEEEAKKEAEKQKEEETKEEIKKEENKEE) form a coiled coil. Positions 347-389 (KKMRDEIKEAEKQKEEEAKKEAEKQKEEETKEEIKKEENKEEL) are disordered. The Prevents secretion from ER signature appears at 386–389 (KEEL).

This sequence belongs to the calreticulin family. As to quaternary structure, interacts (via C-terminus) with host C1q.

The protein resides in the endoplasmic reticulum lumen. It is found in the cell projection. It localises to the uropodium. Its subcellular location is the cell surface. The protein localises to the phagocytic cup. In terms of biological role, molecular calcium-binding chaperone promoting folding, oligomeric assembly and quality control in the ER via the calreticulin/calnexin cycle. This lectin may interact transiently with almost all of the monoglucosylated glycoproteins that are synthesized in the ER. Plays a role in host cell phagocytosis, possibly by acting as a receptor for host C1q. Binding to C1q prevents the activation of the host classical complement pathway. Also, binds to apoptotic host cells independently of host C1q and collectins. The sequence is that of Calreticulin from Entamoeba histolytica (strain ATCC 30459 / HM-1:IMSS / ABRM).